Consider the following 326-residue polypeptide: BTB/POZ domain-containing protein At1g21780 (326 aa).

Residues 161-228 form the BTB domain; the sequence is TDVIIHTADG…LYGNITQEEF (68 aa).

Homodimer. Interacts with CUL3A and CUL3B.

It functions in the pathway protein modification; protein ubiquitination. Its function is as follows. May act as a substrate-specific adapter of an E3 ubiquitin-protein ligase complex (CUL3-RBX1-BTB) which mediates the ubiquitination and subsequent proteasomal degradation of target proteins. This Arabidopsis thaliana (Mouse-ear cress) protein is BTB/POZ domain-containing protein At1g21780.